The following is a 118-amino-acid chain: Large ribosomal subunit protein bL20 (118 aa).

The protein belongs to the bacterial ribosomal protein bL20 family.

Functionally, binds directly to 23S ribosomal RNA and is necessary for the in vitro assembly process of the 50S ribosomal subunit. It is not involved in the protein synthesizing functions of that subunit. This is Large ribosomal subunit protein bL20 from Pectobacterium atrosepticum (strain SCRI 1043 / ATCC BAA-672) (Erwinia carotovora subsp. atroseptica).